The following is a 391-amino-acid chain: MAKAKFERNKPHVNIGTIGHVDHGKTTLTAAITKYFGEFRAYDQIDGAPEERARGITISTAHVEYESESRHYAHVDCPGHADYVKNMITGAAQMDGAILVVNAADGPMPQTREHILLGRQVGIPYMVVYMNKVDQVDDPELLELVEMEIRELLSSYDYPGDDIPIIKGSALAAMNGTDKEIGEDSIRALIAAVDEYIPTPARAVDQPFLMPVEDVFSISGRGTVATGRIERGVVKVGEELEIVGIRPSKKTVCTGVEMFRKLLDQGEAGDNVGLLLRGVDRDGIERGQVLCKPGSVKPHTKFEAEAYILTKEEGGRHTPFFANYRPQFYFRTTDVTGTVELPEGTEMVMPGDNLKFNVELIAPIAMEEKLRFAIREGGRTVGAGVVSKIIA.

Positions Lys10–Ala201 constitute a tr-type G domain. A G1 region spans residues Gly19–Thr26. Gly19–Thr26 is a binding site for GTP. Thr26 contacts Mg(2+). Residues Gly55–Ser59 form a G2 region. The tract at residues Asp76–Gly79 is G3. GTP contacts are provided by residues Asp76 to His80 and Asn131 to Asp134. The tract at residues Asn131 to Asp134 is G4. The tract at residues Ser169 to Leu171 is G5.

This sequence belongs to the TRAFAC class translation factor GTPase superfamily. Classic translation factor GTPase family. EF-Tu/EF-1A subfamily. As to quaternary structure, monomer.

The protein localises to the cytoplasm. It carries out the reaction GTP + H2O = GDP + phosphate + H(+). In terms of biological role, GTP hydrolase that promotes the GTP-dependent binding of aminoacyl-tRNA to the A-site of ribosomes during protein biosynthesis. This Cereibacter sphaeroides (strain ATCC 17025 / ATH 2.4.3) (Rhodobacter sphaeroides) protein is Elongation factor Tu.